The sequence spans 341 residues: Methionine import ATP-binding protein MetN (341 aa).

The ABC transporter domain maps to 9-247; that stretch reads ISVQKVNKEI…PRSSITEELF (239 aa). 41-48 contacts ATP; it reads GHSGSGKS.

This sequence belongs to the ABC transporter superfamily. Methionine importer (TC 3.A.1.24) family. The complex is composed of two ATP-binding proteins (MetN), two transmembrane proteins (MetI) and a solute-binding protein (MetQ).

The protein resides in the cell inner membrane. The enzyme catalyses L-methionine(out) + ATP + H2O = L-methionine(in) + ADP + phosphate + H(+). It carries out the reaction D-methionine(out) + ATP + H2O = D-methionine(in) + ADP + phosphate + H(+). Functionally, part of the ABC transporter complex MetNIQ involved in methionine import. Responsible for energy coupling to the transport system. This Chlamydia caviae (strain ATCC VR-813 / DSM 19441 / 03DC25 / GPIC) (Chlamydophila caviae) protein is Methionine import ATP-binding protein MetN.